Here is a 522-residue protein sequence, read N- to C-terminus: Sterol O-acyltransferase 2 (522 aa).

2 disordered regions span residues 1–36 and 74–96; these read MEPGGARLRLQRTEGLGGERERQPCGDGNTETHRAP and SYPSQDKPLPPPPPGSLSRTQEP. Over 1–120 the chain is Cytoplasmic; it reads MEPGGARLRL…LDELMEVQHF (120 aa). A compositionally biased stretch (basic and acidic residues) spans 17 to 36; the sequence is GGERERQPCGDGNTETHRAP. Residue H119 coordinates cholesterol. The helical transmembrane segment at 121-142 threads the bilayer; that stretch reads RTIYHMFIAGLCVFIISTLAID. The Lumenal portion of the chain corresponds to 143–162; it reads FIDEGRLLLEFDLLIFSFGQ. A helical transmembrane segment spans residues 163–188; that stretch reads LPLALVTWVPMFLSTLLAPYQALRLW. Topologically, residues 189–196 are cytoplasmic; it reads ARGTWTQA. The chain crosses the membrane as a helical span at residues 197–220; that stretch reads TGLGCALLAAHAVVLCALPVHVAV. Residues 221–228 lie on the Lumenal side of the membrane; sequence EHQLPPAS. Residues 229–252 form a helical membrane-spanning segment; that stretch reads RCVLVFEQVRFLMKSYSFLREAVP. The Cytoplasmic portion of the chain corresponds to 253–293; the sequence is GTLRARRGEGIQAPSFSSYLYFLFCPTLIYRETYPRTPYVR. C277 carries the post-translational modification Cysteine sulfenic acid (-SOH); alternate. C277 is covalently cross-linked (Glycyl cysteine thioester (Cys-Gly) (interchain with G-Cter in ubiquitin); alternate). Residues 294 to 326 traverse the membrane as a helical segment; sequence WNYVAKNFAQALGCVLYACFILGRLCVPVFANM. At 327–343 the chain is on the lumenal side; sequence SREPFSTRALVLSILHA. Residues 344 to 369 form a helical membrane-spanning segment; it reads TLPGIFMLLLIFFAFLHCWLNAFAEM. Over 370–417 the chain is Cytoplasmic; that stretch reads LRFGDRMFYRDWWNSTSFSNYYRTWNVVVHDWLYSYVYQDGLRLLGAR. The FYXDWWN motif signature appears at 377-383; the sequence is FYRDWWN. An acyl-CoA-binding residues include N389, R392, N395, H399, Y407, and S430. Residues 418–442 traverse the membrane as a helical segment; the sequence is ARGVAMLGVFLVSAVAHEYIFCFVL. H434 is a catalytic residue. The Lumenal portion of the chain corresponds to 443 to 448; that stretch reads GFFYPV. A helical membrane pass occupies residues 449–464; sequence MLILFLVIGGMLNFMM. The Cytoplasmic portion of the chain corresponds to 465–470; the sequence is HDQRTG. The chain crosses the membrane as a helical span at residues 471-502; it reads PAWNVLMWTMLFLGQGIQVSLYCQEWYARRHC. Residues 503–522 lie on the Lumenal side of the membrane; it reads PLPQATFWGLVTPRSWSCHT.

This sequence belongs to the membrane-bound acyltransferase family. Sterol o-acyltransferase subfamily. As to quaternary structure, may form homo- or heterodimers. Interacts with INSIG1; the interaction is direct and promotes association with AMFR/gp78. Post-translationally, polyubiquitinated by AMFR/gp78 at Cys-277, leading to its degradation when the lipid levels are low. Association with AMFR/gp78 is mediated via interaction with INSIG1. High concentration of cholesterol and fatty acid results in Cys-277 oxidation, preventing ubiquitination at the same site, resulting in protein stabilization. Oxidized at Cys-277: high concentration of cholesterol and fatty acid induce reactive oxygen species, which oxidizes Cys-277, preventing ubiquitination at the same site, and resulting in protein stabilization. As to expression, expression seems confined in hepatocytes and enterocytes.

The protein localises to the endoplasmic reticulum membrane. The enzyme catalyses a sterol + a long-chain fatty acyl-CoA = a long-chain 3-hydroxysterol ester + CoA. It carries out the reaction cholesterol + an acyl-CoA = a cholesterol ester + CoA. It catalyses the reaction cholesterol + (9Z)-octadecenoyl-CoA = cholesteryl (9Z-octadecenoate) + CoA. The catalysed reaction is (5Z,8Z,11Z,14Z,17Z)-eicosapentaenoyl-CoA + cholesterol = (5Z,8Z,11Z,14Z,17Z-eicosapentaenoyl)-cholesterol + CoA. The enzyme catalyses (9Z,12Z,15Z)-octadecatrienoyl-CoA + cholesterol = (9Z,12Z,15Z-octadecatrienoyl)-cholesterol + CoA. It carries out the reaction (5Z,8Z,11Z,14Z)-eicosatetraenoyl-CoA + cholesterol = cholesteryl (5Z,8Z,11Z,14Z)-eicosatetraenoate + CoA. Its function is as follows. Catalyzes the formation of fatty acid-cholesterol esters, which are less soluble in membranes than cholesterol. Plays a role in lipoprotein assembly and dietary cholesterol absorption. Utilizes oleoyl-CoA ((9Z)-octadecenoyl-CoA) and linolenoyl-CoA ((9Z,12Z,15Z)-octadecatrienoyl-CoA) as substrates. May provide cholesteryl esters for lipoprotein secretion from hepatocytes and intestinal mucosa. In terms of biological role, has lower enzymatic activity compared to isoform 1. The polypeptide is Sterol O-acyltransferase 2 (Homo sapiens (Human)).